The primary structure comprises 351 residues: High-affinity nickel transport protein (351 aa).

Topologically, residues Met-1–Lys-19 are cytoplasmic. A helical membrane pass occupies residues Ile-20 to Ala-40. The Periplasmic portion of the chain corresponds to Ala-41 to Thr-51. The chain crosses the membrane as a helical span at residues Ala-52–Ile-72. Topologically, residues Asp-73 to Ser-94 are cytoplasmic. A helical membrane pass occupies residues Leu-95–Leu-115. Residues Gln-116–Val-128 are Periplasmic-facing. The helical transmembrane segment at Ile-129 to Leu-149 threads the bilayer. Residues Arg-150–Pro-199 lie on the Cytoplasmic side of the membrane. The chain crosses the membrane as a helical span at residues Leu-200–Ser-220. The Periplasmic portion of the chain corresponds to Thr-221–Gly-243. The chain crosses the membrane as a helical span at residues Met-244–Ala-264. Over Lys-265–Lys-269 the chain is Cytoplasmic. A helical membrane pass occupies residues Leu-270 to Ile-290. Topologically, residues Glu-291–Asn-316 are periplasmic. A helical membrane pass occupies residues Phe-317–Val-337. Residues Val-338–Ala-351 lie on the Cytoplasmic side of the membrane.

It belongs to the NiCoT transporter (TC 2.A.52) family.

It is found in the cell inner membrane. In terms of biological role, high-affinity nickel transporter responsible for nickel uptake. Necessary for high levels of activity of hydrogenase and urease. Does not transport cobalt. In Cupriavidus necator (strain ATCC 17699 / DSM 428 / KCTC 22496 / NCIMB 10442 / H16 / Stanier 337) (Ralstonia eutropha), this protein is High-affinity nickel transport protein (hoxN).